The chain runs to 243 residues: Orotidine 5'-phosphate decarboxylase (243 aa).

Substrate contacts are provided by residues Asp19, Lys41, 69–78, Thr124, Arg185, Gln194, Gly214, and Arg215; that span reads DLKFFDIPAT. Residue Lys71 is the Proton donor of the active site.

Belongs to the OMP decarboxylase family. Type 1 subfamily. In terms of assembly, homodimer.

The enzyme catalyses orotidine 5'-phosphate + H(+) = UMP + CO2. Its pathway is pyrimidine metabolism; UMP biosynthesis via de novo pathway; UMP from orotate: step 2/2. Catalyzes the decarboxylation of orotidine 5'-monophosphate (OMP) to uridine 5'-monophosphate (UMP). The polypeptide is Orotidine 5'-phosphate decarboxylase (Xanthomonas axonopodis pv. citri (strain 306)).